Consider the following 489-residue polypeptide: Zeta-carotene desaturase (489 aa).

The protein belongs to the zeta carotene desaturase family. Requires NAD(+) as cofactor. It depends on NADP(+) as a cofactor. The cofactor is FAD.

The catalysed reaction is 9,9'-di-cis-zeta-carotene + 2 a quinone = 7,7',9,9'-tetra-cis-lycopene + 2 a quinol. Its pathway is carotenoid biosynthesis; lycopene biosynthesis. Catalyzes the conversion of zeta-carotene to lycopene via the intermediary of neurosporene. It carries out two consecutive desaturations (introduction of double bonds) at positions C-7 and C-7'. The polypeptide is Zeta-carotene desaturase (crtQ) (Synechocystis sp. (strain ATCC 27184 / PCC 6803 / Kazusa)).